We begin with the raw amino-acid sequence, 269 residues long: DNA-binding protein RFXANK (269 aa).

The disordered stretch occupies residues 1 to 36 (MEPTQVAENLVPNQQPPVPDLEDPEDTRDESPENSD). 5 ANK repeats span residues 88–127 (LDSLSIHQLAAQGELSQLKDHLRKGACPACTCLSGNNLIN), 132–161 (RGFTPLIWASAFGEIETVRFLLDWGADPHI), 165–194 (ERESALSLASMGGYTDIVRLLLDRDVDINI), 198–227 (NGGTPLLYAVRGNHVKCVEALLARGADLTT), and 231–260 (SGYTPMDLAVALGYRKVQQVMESHILRLFQ).

Forms homodimers. The RFX heterotetrameric complex consists of 2 molecules of RFX5 and one each of RFXAP and RFX-B/RFXANK; with each subunit representing a separate complementation group. Interacts (via ankyrin repeats) with RFX5 (via PxLPxI/L motif); the interaction is direct. RFX forms cooperative DNA binding complexes with X2BP and CBF/NF-Y. RFX associates with CIITA to form an active transcriptional complex. Interacts with RAF1. Interacts with RFX7. Phosphorylated by RAF1. As to expression, expressed primarily in thymus, lung and testis.

The protein localises to the cytoplasm. It localises to the nucleus. Activates transcription from class II MHC promoters. Activation requires the activity of the MHC class II transactivator/CIITA. May regulate other genes in the cell. RFX binds the X1 box of MHC-II promoters. May also potentiate the activation of RAF1. The polypeptide is DNA-binding protein RFXANK (Rfxank) (Mus musculus (Mouse)).